Reading from the N-terminus, the 964-residue chain is Integrator complex subunit 7 (964 aa).

The segment covering 937–958 (QQLRHQLQQQQQNVPQPAAQRN) has biased composition (low complexity). A disordered region spans residues 937-964 (QQLRHQLQQQQQNVPQPAAQRNISTRFQ).

This sequence belongs to the Integrator subunit 7 family. As to quaternary structure, component of the Integrator complex, composed of core subunits INTS1, INTS2, INTS3, INTS4, INTS5, INTS6, INTS7, INTS8, INTS9/RC74, INTS10, INTS11/CPSF3L, INTS12, INTS13, INTS14 and INTS15. The core complex associates with protein phosphatase 2A subunits PPP2CA and PPP2R1A, to form the Integrator-PP2A (INTAC) complex.

It is found in the nucleus. Its subcellular location is the chromosome. The protein resides in the cytoplasm. Component of the integrator complex, a multiprotein complex that terminates RNA polymerase II (Pol II) transcription in the promoter-proximal region of genes. The integrator complex provides a quality checkpoint during transcription elongation by driving premature transcription termination of transcripts that are unfavorably configured for transcriptional elongation: the complex terminates transcription by (1) catalyzing dephosphorylation of the C-terminal domain (CTD) of Pol II subunit POLR2A/RPB1 and SUPT5H/SPT5, (2) degrading the exiting nascent RNA transcript via endonuclease activity and (3) promoting the release of Pol II from bound DNA. The integrator complex is also involved in terminating the synthesis of non-coding Pol II transcripts, such as enhancer RNAs (eRNAs), small nuclear RNAs (snRNAs), telomerase RNAs and long non-coding RNAs (lncRNAs). Essential during embryogenesis for eye development. This is Integrator complex subunit 7 (ints7) from Danio rerio (Zebrafish).